The chain runs to 290 residues: Signal recognition particle receptor FtsY (290 aa).

GTP contacts are provided by residues glycine 91 to threonine 98, aspartate 173 to arginine 177, and threonine 237 to aspartate 240.

Belongs to the GTP-binding SRP family. FtsY subfamily. In terms of assembly, part of the signal recognition particle protein translocation system, which is composed of SRP and FtsY.

The protein localises to the cell inner membrane. The protein resides in the cytoplasm. It carries out the reaction GTP + H2O = GDP + phosphate + H(+). Involved in targeting and insertion of nascent membrane proteins into the cytoplasmic membrane. Acts as a receptor for the complex formed by the signal recognition particle (SRP) and the ribosome-nascent chain (RNC). The polypeptide is Signal recognition particle receptor FtsY (Chlamydia pneumoniae (Chlamydophila pneumoniae)).